We begin with the raw amino-acid sequence, 452 residues long: Probable hexaprenyl pyrophosphate synthase, mitochondrial (452 aa).

The isopentenyl diphosphate site is built by Lys108, Arg111, and His204. The Mg(2+) site is built by Asp211 and Asp215. Arg220 contributes to the an all-trans-polyprenyl diphosphate binding site. Position 221 (Arg221) interacts with isopentenyl diphosphate. An all-trans-polyprenyl diphosphate-binding residues include Lys303, Thr304, Gln341, and Lys358.

Belongs to the FPP/GGPP synthase family. Mg(2+) serves as cofactor.

Its subcellular location is the mitochondrion. The protein operates within cofactor biosynthesis; ubiquinone biosynthesis. Functionally, assembly of polyisoprenoid side chains. The polyprenyl synthase of coenzyme Q biosynthesis catalyzes the formation from isopentenyl diphosphate of all trans-polyprenyl pyrophosphates generally ranging in length of between 6 and 10 isoprene units depending on the species. The protein is Probable hexaprenyl pyrophosphate synthase, mitochondrial (COQ1) of Yarrowia lipolytica (strain CLIB 122 / E 150) (Yeast).